Consider the following 50-residue polypeptide: Ornatin-E (50 aa).

The Cell attachment site signature appears at 42–44 (RGD).

The protein belongs to the ornatin family.

Its subcellular location is the secreted. In terms of biological role, potent inhibitor of fibrinogen interaction with platelet receptors expressed on glycoprotein IIb-IIIa complex. May prevent blood from clotting during either feeding and/or storage of ingested blood. This Placobdella ornata (Turtle leech) protein is Ornatin-E.